The sequence spans 615 residues: Threonine--tRNA ligase (615 aa).

The editing domain stretch occupies residues Met-1–Thr-132. Positions Pro-196–Pro-495 are catalytic. The Zn(2+) site is built by Cys-288, His-340, and His-464.

It belongs to the class-II aminoacyl-tRNA synthetase family. In terms of assembly, homodimer. The cofactor is Zn(2+).

It localises to the cytoplasm. It carries out the reaction tRNA(Thr) + L-threonine + ATP = L-threonyl-tRNA(Thr) + AMP + diphosphate + H(+). Functionally, catalyzes the attachment of threonine to tRNA(Thr) in a two-step reaction: L-threonine is first activated by ATP to form Thr-AMP and then transferred to the acceptor end of tRNA(Thr). Also edits incorrectly charged L-seryl-tRNA(Thr). The chain is Threonine--tRNA ligase (thrS) from Cenarchaeum symbiosum (strain A).